The following is a 168-amino-acid chain: Sperm acrosome-associated protein 9 (168 aa).

Microtubule inner protein component of sperm flagellar doublet microtubules. Interacts with CABP1 and CALR. Interacts with INCA1. Interacts with microtubules. In terms of tissue distribution, expressed in sperm (at protein level). Expressed from almost all the cell types of testis, with abundant expression in round and elongated spermatids (at protein level). Predominantly expressed in tissues containing motile cilia.

Its subcellular location is the cytoplasm. The protein resides in the cytoplasmic vesicle. The protein localises to the secretory vesicle. It is found in the acrosome. It localises to the cytoskeleton. Its subcellular location is the cilium basal body. The protein resides in the flagellum axoneme. The protein localises to the cilium axoneme. It is found in the nucleus. Its function is as follows. Microtubule inner protein (MIP) part of the dynein-decorated doublet microtubules (DMTs) of multiciliated respiratory cells and the distal singlet microtubules of monoflagellated spermatozoa. Forms an extensive interaction network cross-linking the lumen of axonemal doublet microtubules. This Mus musculus (Mouse) protein is Sperm acrosome-associated protein 9.